The following is a 117-amino-acid chain: Pterin-4-alpha-carbinolamine dehydratase 2 (117 aa).

N6-acetyllysine; alternate occurs at positions 101, 105, and 112. 3 positions are modified to N6-succinyllysine; alternate: Lys-101, Lys-105, and Lys-112.

Belongs to the pterin-4-alpha-carbinolamine dehydratase family. As to quaternary structure, homotetramer. Interacts with DYRK1B.

It catalyses the reaction (4aS,6R)-4a-hydroxy-L-erythro-5,6,7,8-tetrahydrobiopterin = (6R)-L-erythro-6,7-dihydrobiopterin + H2O. Functionally, involved in tetrahydrobiopterin biosynthesis. Seems to both prevent the formation of 7-pterins and accelerate the formation of quinonoid-BH2. Its function is as follows. Regulates the dimerization of homeodomain protein HNF-1-alpha and enhances its transcriptional activity. The protein is Pterin-4-alpha-carbinolamine dehydratase 2 (PCBD2) of Pongo abelii (Sumatran orangutan).